The following is a 182-amino-acid chain: tRNA-splicing endonuclease (182 aa).

Active-site residues include Y119, H127, and K158.

This sequence belongs to the tRNA-intron endonuclease family. Archaeal short subfamily. As to quaternary structure, homotetramer; although the tetramer contains four active sites, only two participate in the cleavage. Therefore, it should be considered as a dimer of dimers.

The catalysed reaction is pretRNA = a 3'-half-tRNA molecule with a 5'-OH end + a 5'-half-tRNA molecule with a 2',3'-cyclic phosphate end + an intron with a 2',3'-cyclic phosphate and a 5'-hydroxyl terminus.. In terms of biological role, endonuclease that removes tRNA introns. Cleaves pre-tRNA at the 5'- and 3'-splice sites to release the intron. The products are an intron and two tRNA half-molecules bearing 2',3' cyclic phosphate and 5'-OH termini. Recognizes a pseudosymmetric substrate in which 2 bulged loops of 3 bases are separated by a stem of 4 bp. The sequence is that of tRNA-splicing endonuclease from Saccharolobus islandicus (strain M.14.25 / Kamchatka #1) (Sulfolobus islandicus).